Reading from the N-terminus, the 29-residue chain is Cytochrome b6-f complex subunit 8 (29 aa).

A helical transmembrane segment spans residues 3–23 (ILTLGWVSLLVVFTWSIAMVV).

This sequence belongs to the PetN family. As to quaternary structure, the 4 large subunits of the cytochrome b6-f complex are cytochrome b6, subunit IV (17 kDa polypeptide, PetD), cytochrome f and the Rieske protein, while the 4 small subunits are PetG, PetL, PetM and PetN. The complex functions as a dimer.

Its subcellular location is the cellular thylakoid membrane. In terms of biological role, component of the cytochrome b6-f complex, which mediates electron transfer between photosystem II (PSII) and photosystem I (PSI), cyclic electron flow around PSI, and state transitions. The protein is Cytochrome b6-f complex subunit 8 of Nostoc punctiforme (strain ATCC 29133 / PCC 73102).